Here is a 488-residue protein sequence, read N- to C-terminus: Cobyric acid synthase (488 aa).

Residues 252–442 form the GATase cobBQ-type domain; the sequence is RTRICVPILP…VHGLFASDAF (191 aa). The active-site Nucleophile is the Cys334. The active site involves His434.

It belongs to the CobB/CobQ family. CobQ subfamily.

Its pathway is cofactor biosynthesis; adenosylcobalamin biosynthesis. Functionally, catalyzes amidations at positions B, D, E, and G on adenosylcobyrinic A,C-diamide. NH(2) groups are provided by glutamine, and one molecule of ATP is hydrogenolyzed for each amidation. The chain is Cobyric acid synthase from Xanthobacter autotrophicus (strain ATCC BAA-1158 / Py2).